A 419-amino-acid chain; its full sequence is Gamma-glutamyl phosphate reductase (419 aa).

The protein belongs to the gamma-glutamyl phosphate reductase family.

The protein resides in the cytoplasm. It catalyses the reaction L-glutamate 5-semialdehyde + phosphate + NADP(+) = L-glutamyl 5-phosphate + NADPH + H(+). It functions in the pathway amino-acid biosynthesis; L-proline biosynthesis; L-glutamate 5-semialdehyde from L-glutamate: step 2/2. Catalyzes the NADPH-dependent reduction of L-glutamate 5-phosphate into L-glutamate 5-semialdehyde and phosphate. The product spontaneously undergoes cyclization to form 1-pyrroline-5-carboxylate. The polypeptide is Gamma-glutamyl phosphate reductase (Maridesulfovibrio salexigens (strain ATCC 14822 / DSM 2638 / NCIMB 8403 / VKM B-1763) (Desulfovibrio salexigens)).